The primary structure comprises 275 residues: Glutamate racemase (275 aa).

Substrate is bound by residues 12–13 (DS) and 44–45 (YG). C75 serves as the catalytic Proton donor/acceptor. Position 76 to 77 (76 to 77 (NT)) interacts with substrate. C185 functions as the Proton donor/acceptor in the catalytic mechanism. 186–187 (TH) serves as a coordination point for substrate.

Belongs to the aspartate/glutamate racemases family.

The enzyme catalyses L-glutamate = D-glutamate. It participates in cell wall biogenesis; peptidoglycan biosynthesis. Its function is as follows. Provides the (R)-glutamate required for cell wall biosynthesis. This is Glutamate racemase from Mycobacterium avium (strain 104).